Here is a 341-residue protein sequence, read N- to C-terminus: Uroporphyrinogen decarboxylase (341 aa).

Substrate-binding positions include 23–27, aspartate 73, tyrosine 147, serine 202, and histidine 318; that span reads RQAGR.

It belongs to the uroporphyrinogen decarboxylase family. In terms of assembly, homodimer.

Its subcellular location is the cytoplasm. It catalyses the reaction uroporphyrinogen III + 4 H(+) = coproporphyrinogen III + 4 CO2. It participates in porphyrin-containing compound metabolism; protoporphyrin-IX biosynthesis; coproporphyrinogen-III from 5-aminolevulinate: step 4/4. In terms of biological role, catalyzes the decarboxylation of four acetate groups of uroporphyrinogen-III to yield coproporphyrinogen-III. In Novosphingobium aromaticivorans (strain ATCC 700278 / DSM 12444 / CCUG 56034 / CIP 105152 / NBRC 16084 / F199), this protein is Uroporphyrinogen decarboxylase.